A 572-amino-acid chain; its full sequence is Hsp70-Hsp90 organizing protein 1 (572 aa).

TPR repeat units follow at residues 2–35, 37–69, and 70–103; these read AEEA…APTN, VLFS…KPYW, and PKGY…DPTN. Residues 133–172 enclose the STI1 1 domain; sequence GPEMWTKLTSDPSTRGFLQQPDFVNMMQEIQKNPSSLNLY. Residue S167 is modified to Phosphoserine. The segment at 189–248 is disordered; the sequence is KFRPPPPQGDEAEVPESDMGQSSSNEPEVEKKREPEPEPEPEVTEEKEKKERKEKAKKEK. Over residues 232-248 the composition is skewed to basic and acidic residues; it reads TEEKEKKERKEKAKKEK. The Bipartite nuclear localization signal signature appears at 241–258; that stretch reads KEKAKKEKELGNAAYKKK. 7 TPR repeats span residues 244 to 277, 279 to 311, 319 to 356, 358 to 382, 383 to 416, 418 to 450, and 451 to 484; these read AKKE…DDED, SYLT…GREL, ARAL…HRNP, TLKR…DPKL, GDEE…NPND, KAYS…DPTF, and SKGY…DPSN. The 40-residue stretch at 521–560 folds into the STI1 2 domain; it reads DPEIQNILTDPVMRQVLSDLQENPSAAQKHMQNPMVMNKI.

Co-chaperone that forms a complex with HSP70 and HSP90 and preproteins (e.g. chloroplast preproteins). Post-translationally, phosphorylated. Acetylated.

Its subcellular location is the cytoplasm. The protein resides in the nucleus. In terms of biological role, mediates the association of the molecular chaperones HSP70 and HSP90. Mediates nuclear encoded chloroplast preproteins binding to HSP90 prior to chloroplastic sorting. This Arabidopsis thaliana (Mouse-ear cress) protein is Hsp70-Hsp90 organizing protein 1 (HOP1).